Consider the following 261-residue polypeptide: Phosphatidylglycerol--prolipoprotein diacylglyceryl transferase (261 aa).

3 helical membrane-spanning segments follow: residues 20–40 (LAIH…VWLA), 54–74 (IIDF…LYYV), and 88–108 (IIAI…GAIV). Arg139 contributes to the a 1,2-diacyl-sn-glycero-3-phospho-(1'-sn-glycerol) binding site. A run of 2 helical transmembrane segments spans residues 175 to 195 (MPTF…VMVF) and 235 to 255 (ARVS…LFVY).

It belongs to the Lgt family.

It localises to the cell membrane. It catalyses the reaction L-cysteinyl-[prolipoprotein] + a 1,2-diacyl-sn-glycero-3-phospho-(1'-sn-glycerol) = an S-1,2-diacyl-sn-glyceryl-L-cysteinyl-[prolipoprotein] + sn-glycerol 1-phosphate + H(+). The protein operates within protein modification; lipoprotein biosynthesis (diacylglyceryl transfer). Its function is as follows. Catalyzes the transfer of the diacylglyceryl group from phosphatidylglycerol to the sulfhydryl group of the N-terminal cysteine of a prolipoprotein, the first step in the formation of mature lipoproteins. The protein is Phosphatidylglycerol--prolipoprotein diacylglyceryl transferase of Lactococcus lactis subsp. cremoris (strain MG1363).